A 252-amino-acid chain; its full sequence is Protein BTG3 (252 aa).

The tract at residues 138-162 is disordered; sequence VTSDYHSGSSSSDEETSKEMEVKPS.

The protein belongs to the BTG family. Ubiquitous. High expression in the ventricular zone of the developing central nervous system. High in ovary, testis, prostate, thymus and lung.

Its function is as follows. Overexpression impairs serum-induced cell cycle progression from the G0/G1 to S phase. The chain is Protein BTG3 (BTG3) from Homo sapiens (Human).